Reading from the N-terminus, the 1871-residue chain is Callose synthase 4 (1871 aa).

The Cytoplasmic segment spans residues 1–491 (MNQPNRGQIL…FWHLFRSFDR (491 aa)). Residues 492-512 (MWSFYILSLQAMIIIAWNETS) form a helical membrane-spanning segment. Residues 513 to 521 (ESGGAVFHK) lie on the Extracellular side of the membrane. The helical transmembrane segment at 522 to 542 (VLSVFITAAKLNLFQAFLDIA) threads the bilayer. Topologically, residues 543 to 558 (LSWKARHSMSTHVRQR) are cytoplasmic. Residues 559–579 (YIFKAVAAAVWVLLMPLTYAY) traverse the membrane as a helical segment. Over 580–583 (SHTS) the chain is Extracellular. The helical transmembrane segment at 584 to 604 (IFIVAILIYLSPNMLPEMLLL) threads the bilayer. Over 605-640 (IPSIRRTLEKSDFRPVKLIMWWSQPELYIGRGMHES) the chain is Cytoplasmic. The helical transmembrane segment at 641–661 (AWSIYKYMMFWIVLLTSKLAF) threads the bilayer. Residues 662-701 (SYYVEQIKPLMGPTKEIMSVPMPGYWLPEFFPHVKNNRGV) lie on the Extracellular side of the membrane. The chain crosses the membrane as a helical span at residues 702–724 (VITLWSPVILVYFMDTQIWYAIV). The Cytoplasmic segment spans residues 725-1441 (STLVGGLYGA…FDFFRMLSCY (717 aa)). A helical transmembrane segment spans residues 1442-1462 (FTTVGFYFCSMLTVLTVYVFL). The Extracellular segment spans residues 1463-1485 (YGRLYLVLSGVEKELGNKPMMME). A helical membrane pass occupies residues 1486 to 1506 (IILASQSFVQIVFLMAMPMIM). At 1507–1516 (EIGLERGFYD) the chain is on the cytoplasmic side. A helical membrane pass occupies residues 1517-1537 (ALFDFVLMQLQLASVFFTFQL). Residues 1538-1580 (GTKFHYYCKTLLHGGAEYRGTGRGFVVFHAKFAENYRFYSRSH) are Extracellular-facing. 2 helical membrane passes run 1581-1601 (FVKA…GPTY) and 1602-1622 (IGLF…APFL). The Extracellular portion of the chain corresponds to 1623–1675 (FNPSGFEWHEIVEDWADWKKWIEYDNGGIGVPPEKSWESWWEKDIEHLQHSGK). Residues 1676 to 1696 (WGIVVEIFFALRFFIFQYGLV) traverse the membrane as a helical segment. The Cytoplasmic segment spans residues 1697–1708 (YQLSAFKNKYSS). A helical membrane pass occupies residues 1709–1729 (LWVFGASWLLILILLLTVTVL). The Extracellular segment spans residues 1730–1741 (DYARRRLGTEFQ). A helical transmembrane segment spans residues 1742–1762 (LLFRIIKVSLFLAFMAIFITL). Residues 1763–1772 (MTCRLILPQD) are Cytoplasmic-facing. The helical transmembrane segment at 1773–1793 (VFLCMLALIPTGWGLLLIAQS) threads the bilayer. Topologically, residues 1794–1815 (CKPLIQQPGIWSWVMTLAWVYD) are extracellular. The chain crosses the membrane as a helical span at residues 1816-1836 (LVMGSLLFIPIAFMAWFPFIS). At 1837–1871 (EFQTRMLFNQAFSRGLHISRILSGQRKHRSSKNKD) the chain is on the cytoplasmic side.

This sequence belongs to the glycosyltransferase 48 family.

It is found in the cell membrane. The catalysed reaction is [(1-&gt;3)-beta-D-glucosyl](n) + UDP-alpha-D-glucose = [(1-&gt;3)-beta-D-glucosyl](n+1) + UDP + H(+). Involved in callose synthesis at the forming cell plate during cytokinesis. During plant growth and development, callose is found as a transitory component of the cell plate in dividing cells, is a major component of pollen mother cell walls and pollen tubes, and is found as a structural component of plasmodesmatal canals. This Arabidopsis thaliana (Mouse-ear cress) protein is Callose synthase 4 (CALS4).